Here is a 739-residue protein sequence, read N- to C-terminus: Phosphoribosylformylglycinamidine synthase subunit PurL (739 aa).

Histidine 54 is a catalytic residue. ATP is bound by residues tyrosine 57 and lysine 96. Residue glutamate 98 coordinates Mg(2+). Substrate is bound by residues 99–102 (SHNH) and arginine 121. Residue histidine 100 is the Proton acceptor of the active site. Aspartate 122 lines the Mg(2+) pocket. Glutamine 245 serves as a coordination point for substrate. A Mg(2+)-binding site is contributed by aspartate 275. Substrate is bound at residue 319–321 (ESQ). ATP contacts are provided by aspartate 504 and glycine 541. Asparagine 542 contributes to the Mg(2+) binding site. Serine 544 contacts substrate.

The protein belongs to the FGAMS family. Monomer. Part of the FGAM synthase complex composed of 1 PurL, 1 PurQ and 2 PurS subunits.

It localises to the cytoplasm. The catalysed reaction is N(2)-formyl-N(1)-(5-phospho-beta-D-ribosyl)glycinamide + L-glutamine + ATP + H2O = 2-formamido-N(1)-(5-O-phospho-beta-D-ribosyl)acetamidine + L-glutamate + ADP + phosphate + H(+). It functions in the pathway purine metabolism; IMP biosynthesis via de novo pathway; 5-amino-1-(5-phospho-D-ribosyl)imidazole from N(2)-formyl-N(1)-(5-phospho-D-ribosyl)glycinamide: step 1/2. Functionally, part of the phosphoribosylformylglycinamidine synthase complex involved in the purines biosynthetic pathway. Catalyzes the ATP-dependent conversion of formylglycinamide ribonucleotide (FGAR) and glutamine to yield formylglycinamidine ribonucleotide (FGAM) and glutamate. The FGAM synthase complex is composed of three subunits. PurQ produces an ammonia molecule by converting glutamine to glutamate. PurL transfers the ammonia molecule to FGAR to form FGAM in an ATP-dependent manner. PurS interacts with PurQ and PurL and is thought to assist in the transfer of the ammonia molecule from PurQ to PurL. In Lactococcus lactis subsp. cremoris (strain SK11), this protein is Phosphoribosylformylglycinamidine synthase subunit PurL.